Reading from the N-terminus, the 215-residue chain is Uracil-DNA glycosylase (215 aa).

The active-site Proton acceptor is Asp-59.

It belongs to the uracil-DNA glycosylase (UDG) superfamily. UNG family.

Its subcellular location is the cytoplasm. The catalysed reaction is Hydrolyzes single-stranded DNA or mismatched double-stranded DNA and polynucleotides, releasing free uracil.. Functionally, excises uracil residues from the DNA which can arise as a result of misincorporation of dUMP residues by DNA polymerase or due to deamination of cytosine. In Aliarcobacter butzleri (strain RM4018) (Arcobacter butzleri), this protein is Uracil-DNA glycosylase.